Consider the following 910-residue polypeptide: Protein translocase subunit SecA (910 aa).

Residues Gln86, 104-108 (GEGKT), and Asp499 contribute to the ATP site. Zn(2+)-binding residues include Cys894, Cys896, Cys905, and His906.

Belongs to the SecA family. As to quaternary structure, monomer and homodimer. Part of the essential Sec protein translocation apparatus which comprises SecA, SecYEG and auxiliary proteins SecDF-YajC and YidC. Requires Zn(2+) as cofactor.

The protein resides in the cell inner membrane. It localises to the cytoplasm. The catalysed reaction is ATP + H2O + cellular proteinSide 1 = ADP + phosphate + cellular proteinSide 2.. In terms of biological role, part of the Sec protein translocase complex. Interacts with the SecYEG preprotein conducting channel. Has a central role in coupling the hydrolysis of ATP to the transfer of proteins into and across the cell membrane, serving both as a receptor for the preprotein-SecB complex and as an ATP-driven molecular motor driving the stepwise translocation of polypeptide chains across the membrane. This chain is Protein translocase subunit SecA, found in Rickettsia bellii (strain OSU 85-389).